The primary structure comprises 316 residues: Ribose-phosphate pyrophosphokinase (316 aa).

ATP is bound by residues 40-42 (DGE) and 99-100 (RQ). The Mg(2+) site is built by histidine 133 and aspartate 174. Residue lysine 197 is part of the active site. Residues arginine 199, aspartate 223, and 227–231 (DTAGT) each bind D-ribose 5-phosphate.

The protein belongs to the ribose-phosphate pyrophosphokinase family. Class I subfamily. In terms of assembly, homohexamer. Mg(2+) is required as a cofactor.

The protein localises to the cytoplasm. The enzyme catalyses D-ribose 5-phosphate + ATP = 5-phospho-alpha-D-ribose 1-diphosphate + AMP + H(+). It participates in metabolic intermediate biosynthesis; 5-phospho-alpha-D-ribose 1-diphosphate biosynthesis; 5-phospho-alpha-D-ribose 1-diphosphate from D-ribose 5-phosphate (route I): step 1/1. In terms of biological role, involved in the biosynthesis of the central metabolite phospho-alpha-D-ribosyl-1-pyrophosphate (PRPP) via the transfer of pyrophosphoryl group from ATP to 1-hydroxyl of ribose-5-phosphate (Rib-5-P). This Fusobacterium nucleatum subsp. nucleatum (strain ATCC 25586 / DSM 15643 / BCRC 10681 / CIP 101130 / JCM 8532 / KCTC 2640 / LMG 13131 / VPI 4355) protein is Ribose-phosphate pyrophosphokinase.